A 249-amino-acid polypeptide reads, in one-letter code: Segregation and condensation protein A (249 aa).

This sequence belongs to the ScpA family. As to quaternary structure, component of a cohesin-like complex composed of ScpA, ScpB and the Smc homodimer, in which ScpA and ScpB bind to the head domain of Smc. The presence of the three proteins is required for the association of the complex with DNA.

The protein localises to the cytoplasm. In terms of biological role, participates in chromosomal partition during cell division. May act via the formation of a condensin-like complex containing Smc and ScpB that pull DNA away from mid-cell into both cell halves. This chain is Segregation and condensation protein A, found in Mycoplasmopsis pulmonis (strain UAB CTIP) (Mycoplasma pulmonis).